A 167-amino-acid chain; its full sequence is I-Kappa-B like protein I1 (167 aa).

ANK repeat units follow at residues 54 to 86, 91 to 121, and 125 to 154; these read HGKQCVHIVSNPGIADPQEKLKLLMEWGADING, FGNTPLHIAAYTQNHKLATWLCNQPGINMGI, and LFKTPYYVACERHDIKIMNILRAKGGQCRI.

Belongs to the polydnaviridae I-Kappa-B-like protein family.

Functionally, suppresses the host immune response through NF-kappa-B inactivation. Possesses ankyrin repeat domains required for NF-kappa-B binding but lacks the regulatory regions required for dissociation from NF-kappa-B and degradation. Therefore, prevents host NF-kappa-B release and subsequent activation. The chain is I-Kappa-B like protein I1 (I1) from Microplitis demolitor (Parasitoid wasp).